The chain runs to 202 residues: ATP-dependent Clp protease proteolytic subunit (202 aa).

The active-site Nucleophile is the Ser-101. His-126 is a catalytic residue.

Belongs to the peptidase S14 family. Component of the chloroplastic Clp protease core complex.

The protein localises to the plastid. It is found in the chloroplast stroma. The enzyme catalyses Hydrolysis of proteins to small peptides in the presence of ATP and magnesium. alpha-casein is the usual test substrate. In the absence of ATP, only oligopeptides shorter than five residues are hydrolyzed (such as succinyl-Leu-Tyr-|-NHMec, and Leu-Tyr-Leu-|-Tyr-Trp, in which cleavage of the -Tyr-|-Leu- and -Tyr-|-Trp bonds also occurs).. In terms of biological role, cleaves peptides in various proteins in a process that requires ATP hydrolysis. Has a chymotrypsin-like activity. Plays a major role in the degradation of misfolded proteins. The polypeptide is ATP-dependent Clp protease proteolytic subunit (Acorus gramineus (Dwarf sweet flag)).